The following is a 600-amino-acid chain: Lamin-B2 (600 aa).

Positions 2 to 27 are head; it reads SGTPIRGTPGGTPLSPTRISRLQEKE. A Phosphoserine; by CDK1 modification is found at S16. In terms of domain architecture, IF rod spans 25 to 381; that stretch reads EKEELRQLND…KLLEGEEERL (357 aa). The coil 1A stretch occupies residues 28 to 64; it reads ELRQLNDRLAVYIDRVRALELENDRLLVKISEKEEVT. The tract at residues 75 to 212 is coil 1B; it reads YESELADARR…NVFEEEIRET (138 aa). Residues 237–379 are coil 2; it reads QALEDLRNQH…YRKLLEGEEE (143 aa). 2 disordered regions span residues 377-449 and 568-600; these read EEER…QMSQ and ENEE…CLVM. Residues 380-600 form a tail region; that stretch reads RLKLSPSPSS…RTTSRGCLVM (221 aa). Residues 383–410 show a composition bias toward low complexity; the sequence is LSPSPSSRVTVSRATSSSSSSSTSLVRS. A Phosphoserine modification is found at S386. The short motif at 414–419 is the Nuclear localization signal element; the sequence is KRRRIE. The LTD domain maps to 445 to 562; the sequence is FQMSQQASAT…EEVAVRTVTK (118 aa). The segment covering 569-583 has biased composition (acidic residues); the sequence is NEEEEDEADFGEEDL. Residues 584 to 600 show a composition bias toward polar residues; the sequence is FNQQGDPRTTSRGCLVM. At C597 the chain carries Cysteine methyl ester. The S-farnesyl cysteine moiety is linked to residue C597. A propeptide spans 598–600 (removed in mature form); it reads LVM.

It belongs to the intermediate filament family. Homodimer. Lamin dimers then assemble into dimeric head-to-tail polymers. Ultimately, two head-to-tail polymers assemble laterally into a protofilament with a uniformly shaped rod of 3.5 nm in diameter. Post-translationally, phosphorylation plays a key role in lamin organization, subcellular localization and nuclear envelope disintegration. Phosphorylation by CDK1 at Ser-16 at the onset of mitosis drives lamin disassembly and nuclear envelope breakdown.

The protein localises to the nucleus lamina. The protein resides in the nucleus envelope. It is found in the nucleus. Its subcellular location is the nucleoplasm. It localises to the nucleus matrix. Its function is as follows. Lamins are intermediate filament proteins that assemble into a filamentous meshwork, and which constitute the major components of the nuclear lamina, a fibrous layer on the nucleoplasmic side of the inner nuclear membrane. Lamins provide a framework for the nuclear envelope, bridging the nuclear envelope and chromatin. Plays an important role in nuclear assembly, chromatin organization, nuclear membrane and telomere dynamics. The protein is Lamin-B2 (LMNB2) of Gallus gallus (Chicken).